The following is a 339-amino-acid chain: Putative clathrin assembly protein At1g14686 (339 aa).

Residues 16–148 enclose the ENTH domain; the sequence is SLIAADDILT…ILFHDGNRHR (133 aa). A disordered region spans residues 283 to 307; the sequence is ESSEESAERTEIAEEEEEEEEEIET. The span at 295–305 shows a compositional bias: acidic residues; sequence AEEEEEEEEEI.

It localises to the membrane. The protein localises to the clathrin-coated pit. It is found in the golgi apparatus. Its subcellular location is the cytoplasmic vesicle. The protein resides in the clathrin-coated vesicle. The sequence is that of Putative clathrin assembly protein At1g14686 from Arabidopsis thaliana (Mouse-ear cress).